Reading from the N-terminus, the 133-residue chain is Small ribosomal subunit protein uS8 (133 aa).

It belongs to the universal ribosomal protein uS8 family. In terms of assembly, part of the 30S ribosomal subunit. Contacts proteins S5 and S12.

One of the primary rRNA binding proteins, it binds directly to 16S rRNA central domain where it helps coordinate assembly of the platform of the 30S subunit. This is Small ribosomal subunit protein uS8 from Synechococcus sp. (strain CC9605).